Here is a 319-residue protein sequence, read N- to C-terminus: Large ribosomal subunit protein uL29m (319 aa).

Residues methionine 1–proline 55 form a disordered region. Residues alanine 15 to proline 24 show a composition bias toward basic residues. Residues threonine 38 to arginine 48 are compositionally biased toward polar residues.

Belongs to the universal ribosomal protein uL29 family. In terms of assembly, component of the mitochondrial large ribosomal subunit. Mature mitochondrial ribosomes consist of a small (37S) and a large (54S) subunit. The 37S subunit contains at least 33 different proteins and 1 molecule of RNA (15S). The 54S subunit contains at least 45 different proteins and 1 molecule of RNA (21S).

The protein resides in the mitochondrion. This is Large ribosomal subunit protein uL29m (MRPL4) from Saccharomyces cerevisiae (strain YJM789) (Baker's yeast).